Reading from the N-terminus, the 496-residue chain is Fascin (496 aa).

This sequence belongs to the fascin family.

Its subcellular location is the cytoplasm. The protein localises to the cytoskeleton. Acts as an actin bundling protein. The protein is Fascin of Strongylocentrotus purpuratus (Purple sea urchin).